The primary structure comprises 393 residues: Probable acetyl-CoA acyltransferase (393 aa).

Cys88 (acyl-thioester intermediate) is an active-site residue. Catalysis depends on proton acceptor residues His349 and Cys378.

Belongs to the thiolase-like superfamily. Thiolase family.

The protein resides in the cytoplasm. It catalyses the reaction 2 acetyl-CoA = acetoacetyl-CoA + CoA. This Staphylococcus aureus (strain MSSA476) protein is Probable acetyl-CoA acyltransferase.